Here is a 601-residue protein sequence, read N- to C-terminus: Elongation factor 4 (601 aa).

Residues 7-189 (KHTRNFSIVA…AIVEKVPVPD (183 aa)) enclose the tr-type G domain. Residues 19–24 (DHGKST) and 136–139 (NKID) contribute to the GTP site.

Belongs to the TRAFAC class translation factor GTPase superfamily. Classic translation factor GTPase family. LepA subfamily.

The protein resides in the cell membrane. The enzyme catalyses GTP + H2O = GDP + phosphate + H(+). Its function is as follows. Required for accurate and efficient protein synthesis under certain stress conditions. May act as a fidelity factor of the translation reaction, by catalyzing a one-codon backward translocation of tRNAs on improperly translocated ribosomes. Back-translocation proceeds from a post-translocation (POST) complex to a pre-translocation (PRE) complex, thus giving elongation factor G a second chance to translocate the tRNAs correctly. Binds to ribosomes in a GTP-dependent manner. The polypeptide is Elongation factor 4 (Clostridium novyi (strain NT)).